We begin with the raw amino-acid sequence, 488 residues long: Envelope glycoprotein gp62 (488 aa).

Residues 1–20 (MGKFLATLILFFQFCPLIFG) form the signal peptide. Over 21 to 442 (DYSPSCCTLT…LGLSQWAREA (422 aa)) the chain is Extracellular. N-linked (GlcNAc...) asparagine; by host glycans are attached at residues Asn-140 and Asn-222. The short motif at 225 to 228 (CIVC) is the CXXC element. N-linked (GlcNAc...) asparagine; by host glycans are attached at residues Asn-244 and Asn-272. The tract at residues 313-333 (AVPVAVWLVSALAMGAGVAGG) is fusion peptide. 2 coiled-coil regions span residues 341-387 (ASGK…LLFW) and 397-429 (QEQCRFPNITNSHVPILQERPPLENRVLTGWGL). Residues 376–392 (AQNRRGLDLLFWEQGGL) are immunosuppression. A disulfide bond links Cys-393 and Cys-400. A glycan (N-linked (GlcNAc...) asparagine; by host) is linked at Asn-404. A helical membrane pass occupies residues 443–463 (LQTGITLVALLLLVILAGPCI). The S-palmitoyl cysteine; by host moiety is linked to residue Cys-462. Topologically, residues 464–488 (LRQLRHLPSRVRYPHYSLIKPESSL) are cytoplasmic.

As to quaternary structure, the mature envelope protein (Env) consists of a trimer of SU-TM heterodimers attached by non-covalent interactions or by a labile interchain disulfide bond. Specific enzymatic cleavages in vivo yield mature proteins. Envelope glycoproteins are synthesized as an inactive precursor that is N-glycosylated and processed likely by host cell furin or by a furin-like protease in the Golgi to yield the mature SU and TM proteins. The cleavage site between SU and TM requires the minimal sequence [KR]-X-[KR]-R. In terms of processing, the transmembrane protein is palmitoylated.

It is found in the virion membrane. Its subcellular location is the host cell membrane. Its function is as follows. The surface protein (SU) attaches the virus to the host cell by binding to its receptor. This interaction triggers the refolding of the transmembrane protein (TM) and is thought to activate its fusogenic potential by unmasking its fusion peptide. Fusion occurs at the host cell plasma membrane. The transmembrane protein (TM) acts as a class I viral fusion protein. Under the current model, the protein has at least 3 conformational states: pre-fusion native state, pre-hairpin intermediate state, and post-fusion hairpin state. During viral and target cell membrane fusion, the coiled coil regions (heptad repeats) assume a trimer-of-hairpins structure, positioning the fusion peptide in close proximity to the C-terminal region of the ectodomain. The formation of this structure appears to drive apposition and subsequent fusion of viral and target cell membranes. Membranes fusion leads to delivery of the nucleocapsid into the cytoplasm. This is Envelope glycoprotein gp62 (env) from Homo sapiens (Human).